Reading from the N-terminus, the 265-residue chain is Leucyl/phenylalanyl-tRNA--protein transferase (265 aa).

The disordered stretch occupies residues 244–265; that stretch reads LDTGPDPASSSVTEISLRPAAP.

Belongs to the L/F-transferase family.

It is found in the cytoplasm. It catalyses the reaction N-terminal L-lysyl-[protein] + L-leucyl-tRNA(Leu) = N-terminal L-leucyl-L-lysyl-[protein] + tRNA(Leu) + H(+). It carries out the reaction N-terminal L-arginyl-[protein] + L-leucyl-tRNA(Leu) = N-terminal L-leucyl-L-arginyl-[protein] + tRNA(Leu) + H(+). The catalysed reaction is L-phenylalanyl-tRNA(Phe) + an N-terminal L-alpha-aminoacyl-[protein] = an N-terminal L-phenylalanyl-L-alpha-aminoacyl-[protein] + tRNA(Phe). In terms of biological role, functions in the N-end rule pathway of protein degradation where it conjugates Leu, Phe and, less efficiently, Met from aminoacyl-tRNAs to the N-termini of proteins containing an N-terminal arginine or lysine. The polypeptide is Leucyl/phenylalanyl-tRNA--protein transferase (Methylibium petroleiphilum (strain ATCC BAA-1232 / LMG 22953 / PM1)).